Reading from the N-terminus, the 214-residue chain is MSLDELKLLEGQLLIPLEMYLAAGIRIGTKMKSKFMEPFIYSARPDGLYLLDVKKTDERIRIAAKMIARYDPSKFVVVSGRQYGHRPVRKFCGLVGCKPMLGRVLPGTFTNPALSHFTEADLMMVTDPRVDEQAVVEAGTMGIPVIALCDTDSPISNVDLIIPTNNRGRKALALIFWLLAREVLRIRGDIPPNGELPVPLSDFEARILTTGEVV.

Belongs to the universal ribosomal protein uS2 family.

The sequence is that of Small ribosomal subunit protein uS2 from Thermofilum pendens (strain DSM 2475 / Hrk 5).